We begin with the raw amino-acid sequence, 117 residues long: Cell cycle protein GpsB (117 aa).

Residues 32–70 are a coiled coil; that stretch reads LDNVIKDYDAFVKENQRLQDENERLLAKVDELTRQVQVG.

Belongs to the GpsB family. As to quaternary structure, forms polymers through the coiled coil domains. Interacts with PBP1, MreC and EzrA.

It localises to the cytoplasm. Divisome component that associates with the complex late in its assembly, after the Z-ring is formed, and is dependent on DivIC and PBP2B for its recruitment to the divisome. Together with EzrA, is a key component of the system that regulates PBP1 localization during cell cycle progression. Its main role could be the removal of PBP1 from the cell pole after pole maturation is completed. Also contributes to the recruitment of PBP1 to the division complex. Not essential for septum formation. This is Cell cycle protein GpsB from Levilactobacillus brevis (strain ATCC 367 / BCRC 12310 / CIP 105137 / JCM 1170 / LMG 11437 / NCIMB 947 / NCTC 947) (Lactobacillus brevis).